A 202-amino-acid chain; its full sequence is dITP/XTP pyrophosphatase (202 aa).

Substrate is bound at residue 10–15 (TSNRHK). Asp-70 acts as the Proton acceptor in catalysis. Asp-70 contacts Mg(2+). Substrate is bound by residues Ser-71, 153-156 (FGYD), Lys-176, and 181-182 (HR).

The protein belongs to the HAM1 NTPase family. In terms of assembly, homodimer. Mg(2+) is required as a cofactor.

It catalyses the reaction XTP + H2O = XMP + diphosphate + H(+). The enzyme catalyses dITP + H2O = dIMP + diphosphate + H(+). It carries out the reaction ITP + H2O = IMP + diphosphate + H(+). In terms of biological role, pyrophosphatase that catalyzes the hydrolysis of nucleoside triphosphates to their monophosphate derivatives, with a high preference for the non-canonical purine nucleotides XTP (xanthosine triphosphate), dITP (deoxyinosine triphosphate) and ITP. Seems to function as a house-cleaning enzyme that removes non-canonical purine nucleotides from the nucleotide pool, thus preventing their incorporation into DNA/RNA and avoiding chromosomal lesions. The protein is dITP/XTP pyrophosphatase of Methylacidiphilum infernorum (isolate V4) (Methylokorus infernorum (strain V4)).